The sequence spans 711 residues: Dendrin (711 aa).

Disordered stretches follow at residues 1 to 22, 49 to 273, 324 to 446, and 479 to 677; these read MLDGPLFSEGPDSPRELQDEES, APSR…KKRL, DLNS…SQGL, and PSGV…AELS. Over residues 75 to 84 the composition is skewed to pro residues; it reads PGSPQPPPRR. Residues 102 to 134 are a coiled coil; that stretch reads LAEVRAREQEKRKAASQEREAKETERKRRKAGG. Basic and acidic residues predominate over residues 105–127; that stretch reads VRAREQEKRKAASQEREAKETER. The nuclear localization stretch occupies residues 113 to 131; the sequence is RKAASQEREAKETERKRRK. Residues 150 to 161 show a composition bias toward low complexity; sequence APRVAQLAGLPA. Residues 186 to 236 are interaction with MAGI2; that stretch reads GSAWAGPWGGRRPGPPSYEAHLLLRGSAGTAPRRRWDRPPPYVAPPSYEGP. 2 stretches are compositionally biased toward low complexity: residues 252-262 and 346-356; these read PTSSAPAATPA and APAGSATAAPC. Residues 341–436 form an interaction with ACTN1 region; the sequence is AGTEIAPAGS…LEGWKATRRA (96 aa). At Ser-389 the chain carries Phosphoserine. An interaction with CD2AP and NPHS1 region spans residues 408-709; sequence GGTGWRESLG…IRGTQQGNRK (302 aa). Basic and acidic residues predominate over residues 529–546; the sequence is GEAEGGRPGDSTLEERTF.

In terms of assembly, forms a ternary complex with MAGI2 and SH3KBP1; recruits DDN to the cytoplasm. Interacts with MAGI1. Interacts with ACTN1 and may interact with WWC1. Interacts with the podocyte slit diaphragm proteins CD2AP, NPHS1 and NPHS2; the interaction with CD2AP and NPHS1 is direct. As to expression, specifically expressed in brain and kidney. Expressed in kidney glomerular capillary loops (at protein level).

It localises to the cell projection. The protein resides in the dendritic spine membrane. The protein localises to the cytoplasm. It is found in the endoplasmic reticulum membrane. Its subcellular location is the perikaryon. It localises to the nucleus. Promotes apoptosis of kidney glomerular podocytes. Podocytes are highly specialized cells essential to the ultrafiltration of blood, resulting in the extraction of urine and the retention of protein. The sequence is that of Dendrin (DDN) from Homo sapiens (Human).